Consider the following 505-residue polypeptide: Olfactomedin-4 (505 aa).

An N-terminal signal peptide occupies residues 1 to 18 (MSYSLLFLLALQFCLGSA). 2 N-linked (GlcNAc...) asparagine glycosylation sites follow: Asn64 and Asn128. The stretch at 174–225 (HIIDMLEVEIRNMTLLVEKLESLDQNNVLSIRRQILALKTKLKECEASKSDL) forms a coiled coil. In terms of domain architecture, Olfactomedin-like spans 237 to 499 (SCSHGGVVNI…LLNYDLVFLQ (263 aa)). Cys238 and Cys429 are disulfide-bonded.

As to quaternary structure, homomultimer; disulfide-linked. Interacts with NDUFA13. Interacts with cell surface lectins (locutions ricinus communis agglutinin I, concanavalin A and wheat germ agglutinin) and cadherin. N-glycosylated.

The protein resides in the secreted. Its subcellular location is the extracellular space. It is found in the mitochondrion. In terms of biological role, may promote proliferation of pancreatic cancer cells by favoring the transition from the S to G2/M phase. In myeloid leukemic cell lines, inhibits cell growth and induces cell differentiation and apoptosis. May play a role in the inhibition of EIF4EBP1 phosphorylation/deactivation. Facilitates cell adhesion, most probably through interaction with cell surface lectins and cadherin. The chain is Olfactomedin-4 (Olfm4) from Mus musculus (Mouse).